Here is a 956-residue protein sequence, read N- to C-terminus: MLEELECGAPGARGAATAMDCKDRPAFPVKKLIQARLPFKRLNLVPKGKADDMSDDQGTSVQSKSPDLEASLDTLENNCHVGSDIDFRPKLVNGKGPLDNFLRNRIETSIGQSTVIIDLTEDSNEQPDSLVDHNKLNSEASPSREAINGQREDTGDQQGLLKAIQNDKLAFPGETLSDIPCKTEEEGVGCGGAGRRGDSQECSPRSCPELTSGPRMCPRKEQDSWSEAGGILFKGKVPMVVLQDILAVRPPQIKSLPATPQGKNMTPESEVLESFPEEDSVLSHSSLSSPSSTSSPEGPPAPPKQHSSTSPFPTSTPLRRITKKFVKGSTEKNKLRLQRDQERLGKQLKLRAEREEKEKLKEEAKRAKEEAKKKKEEEKELKEKERREKREKDEKEKAEKQRLKEERRKERQEALEAKLEEKRKKEEEKRLREEEKRIKAEKAEITRFFQKPKTPQAPKTLAGSCGKFAPFEIKEHMVLAPRRRTAFHPDLCSQLDQLLQQQSGEFSFLKDLKGRQPLRSGPTHVSTRNADIFNSDVVIVERGKGDGVPERRKFGRMKLLQFCENHRPAYWGTWNKKTALIRARDPWAQDTKLLDYEVDSDEEWEEEEPGESLSHSEGDDDDDMGEDEDEDDGFFVPHGYLSEDEGVTEECADPENHKVRQKLKAKEWDEFLAKGKRFRVLQPVKIGCVWAADRDCAGDDLKVLQQFAACFLETLPAQEEQTPKASKRERRDEQILAQLLPLLHGNVNGSKVIIREFQEHCRRGLLSNHTGSPRSPSTTYLHTPTPSEDAAIPSKSRLKRLISENSVYEKRPDFRMCWYVHPQVLQSFQQEHLPVPCQWSYVTSVPSAPKEDSGSVPSTGPSQGTPISLKRKSAGSMCITQFMKKRRHDGQIGAEDMDGFQADTEEEEEEEGDCMIVDVPDAAEVQAPCGAASGAGGGVGVDTGKATLTASPLGAS.

The binds to PCNA stretch occupies residues 1-49 (MLEELECGAPGARGAATAMDCKDRPAFPVKKLIQARLPFKRLNLVPKGK). Positions 1 to 314 (MLEELECGAP…QHSSTSPFPT (314 aa)) are binds to CBX1 chromo shadow domain. 2 disordered regions span residues 45–65 (VPKG…QSKS) and 122–155 (DSNE…EDTG). Polar residues predominate over residues 56–65 (DQGTSVQSKS). Phosphoserine is present on residues Ser-65, Ser-123, Ser-138, Ser-141, and Ser-143. Lys-182 participates in a covalent cross-link: Glycyl lysine isopeptide (Lys-Gly) (interchain with G-Cter in SUMO1); alternate. Residue Lys-182 forms a Glycyl lysine isopeptide (Lys-Gly) (interchain with G-Cter in SUMO2); alternate linkage. The segment at 188 to 222 (VGCGGAGRRGDSQECSPRSCPELTSGPRMCPRKEQ) is disordered. A phosphoserine mark is found at Ser-206 and Ser-224. Positions 233 to 246 (FKGKVPMVVLQDIL) match the PxVxL motif motif. 2 disordered regions span residues 250 to 432 (PPQI…KRLR) and 599 to 639 (DSDE…VPHG). 2 stretches are compositionally biased toward low complexity: residues 282-296 (LSHS…TSSP) and 307-317 (SSTSPFPTSTP). Ser-310 carries the phosphoserine modification. Basic and acidic residues predominate over residues 329–432 (STEKNKLRLQ…RKKEEEKRLR (104 aa)). Acidic residues-rich tracts occupy residues 599-610 (DSDEEWEEEEPG) and 618-633 (GDDD…EDDG). The necessary for homodimerization and competence for chromatin assembly stretch occupies residues 642 to 678 (SEDEGVTEECADPENHKVRQKLKAKEWDEFLAKGKRF). The tract at residues 660–956 (RQKLKAKEWD…TLTASPLGAS (297 aa)) is binds to p60. A Phosphothreonine modification is found at Thr-722. Residues 765 to 790 (LLSNHTGSPRSPSTTYLHTPTPSEDA) form a disordered region. The segment covering 767–786 (SNHTGSPRSPSTTYLHTPTP) has biased composition (polar residues). 3 positions are modified to phosphoserine: Ser-772, Ser-775, and Ser-803. 2 disordered regions span residues 844–873 (SVPS…KRKS) and 933–956 (SGAG…LGAS). The segment covering 855–866 (SVPSTGPSQGTP) has biased composition (polar residues). Thr-865 bears the Phosphothreonine mark. Phosphoserine is present on residues Ser-868, Ser-873, and Ser-951.

The protein belongs to the CHAF1A family. As to quaternary structure, homodimer. Part of the CAF-1 complex that contains RBBP4, CHAF1B and CHAF1A. CHAF1A binds directly to CHAF1B. Only minor amounts of RBBP4 are complexed with CHAF1A and CHAF1B in G1 phase. Interacts with PCNA; the interaction is direct. Interacts (via the PxVxL motif) with CBX5; the interaction is direct. Interacts with MBD1. Interacts with histones H3.1, H3.2 and H3.1t.

The protein resides in the nucleus. In terms of biological role, acts as a component of the histone chaperone complex chromatin assembly factor 1 (CAF-1), which assembles histone octamers onto DNA during replication and repair. CAF-1 performs the first step of the nucleosome assembly process, bringing newly synthesized histones H3 and H4 to replicating DNA; histones H2A/H2B can bind to this chromatin precursor subsequent to DNA replication to complete the histone octamer. It may play a role in heterochromatin maintenance in proliferating cells by bringing newly synthesized cbx proteins to heterochromatic DNA replication foci. The polypeptide is Chromatin assembly factor 1 subunit A (Homo sapiens (Human)).